The primary structure comprises 376 residues: Probable cysteine protease RDL3 (376 aa).

The signal sequence occupies residues 1 to 27 (MAISFRTLALLTLSVLLISISLGVVTA). Positions 28–126 (TESQRNEGEV…ERYQYKEGDV (99 aa)) are cleaved as a propeptide — activation peptide. N-linked (GlcNAc...) asparagine glycosylation occurs at asparagine 80. Intrachain disulfides connect cysteine 149/cysteine 192 and cysteine 183/cysteine 226. Cysteine 152 is a catalytic residue. Asparagine 270 carries an N-linked (GlcNAc...) asparagine glycan. An intrachain disulfide couples cysteine 283 to cysteine 336. Active-site residues include histidine 290 and asparagine 311. Residue asparagine 349 is glycosylated (N-linked (GlcNAc...) asparagine).

It belongs to the peptidase C1 family. As to expression, expressed in root hairs.

In terms of biological role, probable thiol protease. The protein is Probable cysteine protease RDL3 of Arabidopsis thaliana (Mouse-ear cress).